The primary structure comprises 251 residues: Probable transcriptional regulatory protein BLD_0450 (251 aa).

It belongs to the TACO1 family.

It localises to the cytoplasm. This chain is Probable transcriptional regulatory protein BLD_0450, found in Bifidobacterium longum (strain DJO10A).